The primary structure comprises 762 residues: 5-methyltetrahydropteroyltriglutamate--homocysteine methyltransferase (762 aa).

5-methyltetrahydropteroyltri-L-glutamate is bound by residues 17–20 and K111; that span reads REWK. L-homocysteine is bound by residues 435 to 437 and E488; that span reads IGS. L-methionine is bound by residues 435–437 and E488; that span reads IGS. 5-methyltetrahydropteroyltri-L-glutamate is bound by residues 519–520 and W565; that span reads RC. L-homocysteine is bound at residue D603. D603 serves as a coordination point for L-methionine. 5-methyltetrahydropteroyltri-L-glutamate is bound at residue E609. H645, C647, and E669 together coordinate Zn(2+). The Proton donor role is filled by H698. Residue C730 participates in Zn(2+) binding.

It belongs to the vitamin-B12 independent methionine synthase family. Zn(2+) is required as a cofactor.

It carries out the reaction 5-methyltetrahydropteroyltri-L-glutamate + L-homocysteine = tetrahydropteroyltri-L-glutamate + L-methionine. Its pathway is amino-acid biosynthesis; L-methionine biosynthesis via de novo pathway; L-methionine from L-homocysteine (MetE route): step 1/1. Catalyzes the transfer of a methyl group from 5-methyltetrahydrofolate to homocysteine resulting in methionine formation. The polypeptide is 5-methyltetrahydropteroyltriglutamate--homocysteine methyltransferase (Bacillus thuringiensis (strain Al Hakam)).